The following is a 469-amino-acid chain: Desmin (469 aa).

Residues 2 to 107 (SQAYSSSQRV…QEFLTTRTNE (106 aa)) are head. Ser-7 is modified (phosphoserine; by CDK1). Ser-12 carries the phosphoserine; by AURKB modification. At Arg-16 the chain carries Omega-N-methylarginine. Thr-17 carries the post-translational modification Phosphothreonine; by AURKB and ROCK1. Residues Ser-28 and Ser-32 each carry the phosphoserine; by CDK1 modification. The residue at position 37 (Arg-37) is an Asymmetric dimethylarginine; alternate. Omega-N-methylarginine; alternate is present on Arg-37. Ser-45 carries the phosphoserine modification. At Arg-58 the chain carries ADP-ribosylarginine. Residue Ser-60 is modified to Phosphoserine; by AURKB. Arg-70 carries the omega-N-methylarginine modification. A Phosphothreonine; by ROCK1 modification is found at Thr-76. Phosphoserine is present on Ser-81. The 309-residue stretch at 107 to 415 (EKVELQELND…KLLEGEESRI (309 aa)) folds into the IF rod domain. Residues 108-140 (KVELQELNDRFANYIEKVRFLEQQNAALAAEVN) form a coil 1A region. A linker 1 region spans residues 141 to 150 (RLKGREPTRV). Residues 151 to 251 (AEIYEEELRE…HEEEIRELQA (101 aa)) are coil 1B. Residues 252–267 (QLQEQQVQVEMDMSKP) form a linker 12 region. Residues 267-414 (PDLTAALRDI…RKLLEGEESR (148 aa)) are interaction with NEB. The interval 268-286 (DLTAALRDIRAQYETIAAK) is coil 2A. The interval 287-294 (NISEAEEW) is linker 2. A phosphoserine mark is found at Ser-289, Ser-357, Ser-360, and Ser-423. The interval 295–411 (YKSKVSDLTQ…ATYRKLLEGE (117 aa)) is coil 2B. Positions 412–469 (ESRINLPIQTYSALNFRETSPEQRGSEVHTKKTVMIKTIETRDGEVVSEATQQQHEVL) are tail. Residues 437 to 452 (SEVHTKKTVMIKTIET) are interaction with CRYAB.

It belongs to the intermediate filament family. As to quaternary structure, homomer. Interacts with DST. Interacts with MTM1. Interacts with EPPK1; interaction is dependent of higher-order structure of intermediate filament. Interacts with CRYAB. Interacts with NEB (via nebulin repeats 160-164). Interacts (via rod region) with NEBL (via nebulin repeats 1-5). Interacts with ASB2; the interaction targets DES for proteasomal degradation. Interacts with PKP1. Interacts with FLII. In terms of processing, ADP-ribosylation prevents ability to form intermediate filaments. Phosphorylation at Ser-7, Ser-28 and Ser-32 by CDK1, phosphorylation at Ser-60 by AURKB and phosphorylation at Thr-76 by ROCK1 contribute to efficient separation of desmin intermediate filaments during mitosis. Post-translationally, ubiquitination by a SCF-like complex containing ASB2 leads to proteasomal degradation.

Its subcellular location is the cytoplasm. The protein resides in the myofibril. The protein localises to the sarcomere. It localises to the z line. It is found in the cell membrane. Its subcellular location is the sarcolemma. The protein resides in the nucleus. The protein localises to the cell tip. It localises to the nucleus envelope. Muscle-specific type III intermediate filament essential for proper muscular structure and function. Plays a crucial role in maintaining the structure of sarcomeres, inter-connecting the Z-disks and forming the myofibrils, linking them not only to the sarcolemmal cytoskeleton, but also to the nucleus and mitochondria, thus providing strength for the muscle fiber during activity. In adult striated muscle they form a fibrous network connecting myofibrils to each other and to the plasma membrane from the periphery of the Z-line structures. May act as a sarcomeric microtubule-anchoring protein: specifically associates with detyrosinated tubulin-alpha chains, leading to buckled microtubules and mechanical resistance to contraction. Required for nuclear membrane integrity, via anchoring at the cell tip and nuclear envelope, resulting in maintenance of microtubule-derived intracellular mechanical forces. Contributes to the transcriptional regulation of the NKX2-5 gene in cardiac progenitor cells during a short period of cardiomyogenesis and in cardiac side population stem cells in the adult. Plays a role in maintaining an optimal conformation of nebulette (NEB) on heart muscle sarcomeres to bind and recruit cardiac alpha-actin. In Canis lupus familiaris (Dog), this protein is Desmin (DES).